Reading from the N-terminus, the 658-residue chain is UvrABC system protein B (658 aa).

The Helicase ATP-binding domain maps to 26 to 413 (EGINSGKKKQ…SPEVIEQIIR (388 aa)). 39 to 46 (GATGTGKT) is an ATP binding site. A Beta-hairpin motif is present at residues 92–115 (YYDYYQPEAYVPQTDTFIEKDAQI). The Helicase C-terminal domain maps to 430–596 (QIDDLLGEIQ…TIQKGVRDVI (167 aa)). The UVR domain occupies 622-657 (EKTIAKMEAEMKEAAKALDFERAAELRDLLLELKAE).

Belongs to the UvrB family. As to quaternary structure, forms a heterotetramer with UvrA during the search for lesions. Interacts with UvrC in an incision complex.

It localises to the cytoplasm. Functionally, the UvrABC repair system catalyzes the recognition and processing of DNA lesions. A damage recognition complex composed of 2 UvrA and 2 UvrB subunits scans DNA for abnormalities. Upon binding of the UvrA(2)B(2) complex to a putative damaged site, the DNA wraps around one UvrB monomer. DNA wrap is dependent on ATP binding by UvrB and probably causes local melting of the DNA helix, facilitating insertion of UvrB beta-hairpin between the DNA strands. Then UvrB probes one DNA strand for the presence of a lesion. If a lesion is found the UvrA subunits dissociate and the UvrB-DNA preincision complex is formed. This complex is subsequently bound by UvrC and the second UvrB is released. If no lesion is found, the DNA wraps around the other UvrB subunit that will check the other stand for damage. This chain is UvrABC system protein B, found in Bacillus cereus (strain ATCC 10987 / NRS 248).